The following is a 221-amino-acid chain: Glycerol metabolism activator (221 aa).

The Response regulatory domain maps to 3–120 (KILIADDHPL…QMTDAIEQIL (118 aa)). 4-aspartylphosphate is present on Asp55. The HTH luxR-type domain maps to 149–214 (APELLQALTR…QAILSAGDID (66 aa)). Residues 173 to 192 (NKQIAYNLDIAETTVKAHVS) constitute a DNA-binding region (H-T-H motif).

Positive activator for glycerol metabolism. Regulates the expression of qedA in a positive manner and governs the expression of ADH I and ADH IIB. General regulator of quinoprotein ethanol oxidation and affects expression of ADH IIG activity but is not the sole regulator. The chain is Glycerol metabolism activator from Pseudomonas putida (Arthrobacter siderocapsulatus).